A 564-amino-acid chain; its full sequence is Pumilio homolog 9 (564 aa).

One can recognise a PUM-HD domain in the interval 222-564; that stretch reads LEDTVLIGQG…KIFSKTILKK (343 aa). 8 Pumilio repeats span residues 249–284, 285–320, 321–359, 361–396, 397–432, 433–469, 470–501, and 502–539; these read EIYG…VILL, AIID…LIVS, VLTS…ALVK, GLKP…FVLE, AATK…RLVA, EISR…VQFR, MHYA…EIVR, and ELLC…KLVA.

It is found in the cytoplasm. Sequence-specific RNA-binding protein that regulates translation and mRNA stability by binding the 3'-UTR of target mRNAs. The sequence is that of Pumilio homolog 9 (APUM9) from Arabidopsis thaliana (Mouse-ear cress).